The following is a 210-amino-acid chain: Na(+)-translocating NADH-quinone reductase subunit D (210 aa).

6 helical membrane passes run 11–31 (ILAP…VCSA), 42–62 (FVMT…VSLI), 72–92 (IIVQ…VLKA), 103–123 (VFVG…AFAM), 131–151 (FIDG…VGFF), and 178–198 (NGLM…IWAI).

The protein belongs to the NqrDE/RnfAE family. As to quaternary structure, composed of six subunits; NqrA, NqrB, NqrC, NqrD, NqrE and NqrF.

It localises to the cell inner membrane. The enzyme catalyses a ubiquinone + n Na(+)(in) + NADH + H(+) = a ubiquinol + n Na(+)(out) + NAD(+). NQR complex catalyzes the reduction of ubiquinone-1 to ubiquinol by two successive reactions, coupled with the transport of Na(+) ions from the cytoplasm to the periplasm. NqrA to NqrE are probably involved in the second step, the conversion of ubisemiquinone to ubiquinol. The chain is Na(+)-translocating NADH-quinone reductase subunit D from Vibrio atlanticus (strain LGP32) (Vibrio splendidus (strain Mel32)).